A 322-amino-acid polypeptide reads, in one-letter code: MLNSFKLSLQYILPKLWLTRLAGWGASKRAGWLTKLVIDLFVKYYKVDMTETQKPDTASYRTFNDFFVRPLRDDVRPLNTDPNILVMPADGVISQLGRIEEDKILQAKGHNYSLEALLAGNYLMADKFRNGTFVTTYLSPRDYHRVHMPCNGILREMIYVPGELFSVNHLTAQNVPNLFARNERVICLFDTEFGPMAQILVGATIVGSIETVWAGTITPPREGIIKRWTWPAGENEDSVALLKGQEMGRFKLGSTVINLFAPGKVDLIESLANLSVTKIGQPLATSTEAFVAPEVEPVPLPEEEIKAEHDASPLVDDKKDET.

Residues Asp-90, His-147, and Ser-254 each act as charge relay system; for autoendoproteolytic cleavage activity in the active site. Ser-254 serves as the catalytic Schiff-base intermediate with substrate; via pyruvic acid; for decarboxylase activity. A Pyruvic acid (Ser); by autocatalysis modification is found at Ser-254. The interval 294–322 (EVEPVPLPEEEIKAEHDASPLVDDKKDET) is disordered. Positions 303 to 322 (EEIKAEHDASPLVDDKKDET) are enriched in basic and acidic residues.

It belongs to the phosphatidylserine decarboxylase family. PSD-B subfamily. Prokaryotic type I sub-subfamily. Heterodimer of a large membrane-associated beta subunit and a small pyruvoyl-containing alpha subunit. The cofactor is pyruvate. Post-translationally, is synthesized initially as an inactive proenzyme. Formation of the active enzyme involves a self-maturation process in which the active site pyruvoyl group is generated from an internal serine residue via an autocatalytic post-translational modification. Two non-identical subunits are generated from the proenzyme in this reaction, and the pyruvate is formed at the N-terminus of the alpha chain, which is derived from the carboxyl end of the proenzyme. The autoendoproteolytic cleavage occurs by a canonical serine protease mechanism, in which the side chain hydroxyl group of the serine supplies its oxygen atom to form the C-terminus of the beta chain, while the remainder of the serine residue undergoes an oxidative deamination to produce ammonia and the pyruvoyl prosthetic group on the alpha chain. During this reaction, the Ser that is part of the protease active site of the proenzyme becomes the pyruvoyl prosthetic group, which constitutes an essential element of the active site of the mature decarboxylase.

The protein localises to the cell membrane. It carries out the reaction a 1,2-diacyl-sn-glycero-3-phospho-L-serine + H(+) = a 1,2-diacyl-sn-glycero-3-phosphoethanolamine + CO2. It participates in phospholipid metabolism; phosphatidylethanolamine biosynthesis; phosphatidylethanolamine from CDP-diacylglycerol: step 2/2. Functionally, catalyzes the formation of phosphatidylethanolamine (PtdEtn) from phosphatidylserine (PtdSer). This is Phosphatidylserine decarboxylase proenzyme from Salmonella arizonae (strain ATCC BAA-731 / CDC346-86 / RSK2980).